Consider the following 124-residue polypeptide: Putative calmodulin-3 (124 aa).

4 EF-hand domains span residues glycine 1 to asparagine 18, proline 19 to aspartate 54, aspartate 56 to lysine 91, and leucine 92 to lysine 124. The Ca(2+) site is built by cysteine 2, glutamate 7, aspartate 32, aspartate 34, asparagine 36, threonine 38, glutamate 43, aspartate 69, aspartate 71, asparagine 73, and glutamate 80. Lysine 91 bears the N6,N6,N6-trimethyllysine mark. Residues aspartate 105, aspartate 107, aspartate 109, glutamine 111, and glutamate 116 each contribute to the Ca(2+) site.

Belongs to the calmodulin family. In terms of tissue distribution, not detected in the organs tested.

Functionally, calmodulin mediates the control of a large number of enzymes, ion channels and other proteins by Ca(2+). Among the enzymes to be stimulated by the calmodulin-Ca(2+) complex are a number of protein kinases and phosphatases. This Solanum tuberosum (Potato) protein is Putative calmodulin-3 (PCM3).